A 596-amino-acid polypeptide reads, in one-letter code: Aspartic proteinase yapsin-7 (596 aa).

The signal sequence occupies residues 1–25 (MTCLILWYLWLISTFQLEFATASTA). N-linked (GlcNAc...) asparagine glycans are attached at residues asparagine 26 and asparagine 59. The Lumenal segment spans residues 26–575 (NTTTTAKSGT…SPYTFNKDPA (550 aa)). The 385-residue stretch at 56-440 (YYVNSTFGTP…DLEDNTIAIA (385 aa)) folds into the Peptidase A1 domain. Residue aspartate 74 is part of the active site. N-linked (GlcNAc...) asparagine glycans are attached at residues asparagine 106, asparagine 131, asparagine 140, asparagine 143, asparagine 148, asparagine 175, and asparagine 308. Residue aspartate 321 is part of the active site. Residues asparagine 391, asparagine 455, asparagine 478, asparagine 484, asparagine 549, and asparagine 552 are each glycosylated (N-linked (GlcNAc...) asparagine). A helical transmembrane segment spans residues 576 to 596 (GHVTRIASLLLLSIFSILIVL).

The protein belongs to the peptidase A1 family.

Its subcellular location is the cytoplasm. It is found in the endoplasmic reticulum membrane. The polypeptide is Aspartic proteinase yapsin-7 (YPS7) (Saccharomyces cerevisiae (strain ATCC 204508 / S288c) (Baker's yeast)).